We begin with the raw amino-acid sequence, 649 residues long: tRNA-guanine(15) transglycosylase (649 aa).

The Nucleophile role is filled by aspartate 88. Substrate-binding residues include aspartate 123 and alanine 194. Zn(2+) contacts are provided by cysteine 280, cysteine 282, and cysteine 285. The 76-residue stretch at 573–648 (KYRIVIDSSV…VAATLRGGLK (76 aa)) folds into the PUA domain.

This sequence belongs to the archaeosine tRNA-ribosyltransferase family. Zn(2+) is required as a cofactor.

It catalyses the reaction guanosine(15) in tRNA + 7-cyano-7-deazaguanine = 7-cyano-7-carbaguanosine(15) in tRNA + guanine. The protein operates within tRNA modification; archaeosine-tRNA biosynthesis. Functionally, exchanges the guanine residue with 7-cyano-7-deazaguanine (preQ0) at position 15 in the dihydrouridine loop (D-loop) of archaeal tRNAs. This is tRNA-guanine(15) transglycosylase from Methanococcus maripaludis (strain DSM 14266 / JCM 13030 / NBRC 101832 / S2 / LL).